The primary structure comprises 164 residues: uncharacterized protein (164 aa).

Residues 46 to 66 traverse the membrane as a helical segment; sequence FIRPNIYLIIFIIIVLLLLYY. Residues 72 to 137 are a coiled coil; it reads KADKEKEKLE…YNLNKENLRE (66 aa). A compositionally biased stretch (basic and acidic residues) spans 76-91; the sequence is EKEKLEDTDKEFDKST. The segment at 76-114 is disordered; that stretch reads EKEKLEDTDKEFDKSTNNDTNSKKIYHRQKNSKTLNSSK.

It localises to the membrane. This is an uncharacterized protein from Acanthamoeba polyphaga mimivirus (APMV).